The sequence spans 140 residues: Putative nickel-responsive regulator 2 (140 aa).

His-81, His-92, His-94, and Cys-100 together coordinate Ni(2+).

This sequence belongs to the transcriptional regulatory CopG/NikR family. The cofactor is Ni(2+).

In terms of biological role, transcriptional regulator. In Methanosarcina acetivorans (strain ATCC 35395 / DSM 2834 / JCM 12185 / C2A), this protein is Putative nickel-responsive regulator 2.